Here is a 302-residue protein sequence, read N- to C-terminus: Light-independent protochlorophyllide reductase iron-sulfur ATP-binding protein (302 aa).

A compositionally biased stretch (polar residues) spans 1–10 (MSTATISPSQ). The tract at residues 1–21 (MSTATISPSQIGRGARPDGEG) is disordered. ATP contacts are provided by residues 46 to 51 (GIGKST) and K75. Position 50 (S50) interacts with Mg(2+). [4Fe-4S] cluster-binding residues include C131 and C165. Residues 216–217 (NR) and 240–242 (PAL) contribute to the ATP site.

It belongs to the NifH/BchL/ChlL family. In terms of assembly, homodimer. Protochlorophyllide reductase is composed of three subunits; BchL, BchN and BchB. The cofactor is [4Fe-4S] cluster.

The enzyme catalyses chlorophyllide a + oxidized 2[4Fe-4S]-[ferredoxin] + 2 ADP + 2 phosphate = protochlorophyllide a + reduced 2[4Fe-4S]-[ferredoxin] + 2 ATP + 2 H2O. The protein operates within porphyrin-containing compound metabolism; bacteriochlorophyll biosynthesis (light-independent). Component of the dark-operative protochlorophyllide reductase (DPOR) that uses Mg-ATP and reduced ferredoxin to reduce ring D of protochlorophyllide (Pchlide) to form chlorophyllide a (Chlide). This reaction is light-independent. The L component serves as a unique electron donor to the NB-component of the complex, and binds Mg-ATP. This is Light-independent protochlorophyllide reductase iron-sulfur ATP-binding protein from Rubrivivax gelatinosus (strain NBRC 100245 / IL144).